Reading from the N-terminus, the 37-residue chain is Large ribosomal subunit protein bL36 (37 aa).

This sequence belongs to the bacterial ribosomal protein bL36 family.

This chain is Large ribosomal subunit protein bL36, found in Shewanella frigidimarina (strain NCIMB 400).